Here is a 122-residue protein sequence, read N- to C-terminus: Large ribosomal subunit protein uL18 (122 aa).

Belongs to the universal ribosomal protein uL18 family. In terms of assembly, part of the 50S ribosomal subunit; part of the 5S rRNA/L5/L18/L25 subcomplex. Contacts the 5S and 23S rRNAs.

In terms of biological role, this is one of the proteins that bind and probably mediate the attachment of the 5S RNA into the large ribosomal subunit, where it forms part of the central protuberance. The polypeptide is Large ribosomal subunit protein uL18 (Fervidobacterium nodosum (strain ATCC 35602 / DSM 5306 / Rt17-B1)).